The primary structure comprises 505 residues: Lysine--tRNA ligase (505 aa).

Mg(2+)-binding residues include glutamate 403 and glutamate 410.

It belongs to the class-II aminoacyl-tRNA synthetase family. In terms of assembly, homodimer. Requires Mg(2+) as cofactor.

It is found in the cytoplasm. It catalyses the reaction tRNA(Lys) + L-lysine + ATP = L-lysyl-tRNA(Lys) + AMP + diphosphate. This is Lysine--tRNA ligase from Methanospirillum hungatei JF-1 (strain ATCC 27890 / DSM 864 / NBRC 100397 / JF-1).